The primary structure comprises 250 residues: ATP synthase subunit a (250 aa).

Helical transmembrane passes span 29–49, 84–104, 114–134, 143–163, 189–209, and 216–236; these read ASLF…FATS, FFPM…LGMM, IVVT…YGFY, LFVP…IEVI, VFAG…GGAL, and VALT…FAVL.

It belongs to the ATPase A chain family. F-type ATPases have 2 components, CF(1) - the catalytic core - and CF(0) - the membrane proton channel. CF(1) has five subunits: alpha(3), beta(3), gamma(1), delta(1), epsilon(1). CF(0) has three main subunits: a(1), b(2) and c(9-12). The alpha and beta chains form an alternating ring which encloses part of the gamma chain. CF(1) is attached to CF(0) by a central stalk formed by the gamma and epsilon chains, while a peripheral stalk is formed by the delta and b chains.

Its subcellular location is the cell inner membrane. Its function is as follows. Key component of the proton channel; it plays a direct role in the translocation of protons across the membrane. The protein is ATP synthase subunit a of Allorhizobium ampelinum (strain ATCC BAA-846 / DSM 112012 / S4) (Agrobacterium vitis (strain S4)).